We begin with the raw amino-acid sequence, 347 residues long: tRNA pseudouridine synthase D (347 aa).

D78 acts as the Nucleophile in catalysis. One can recognise a TRUD domain in the interval 150 to 304 (GLPNFFGPQR…AEGTRRAARL (155 aa)).

It belongs to the pseudouridine synthase TruD family.

The catalysed reaction is uridine(13) in tRNA = pseudouridine(13) in tRNA. Functionally, responsible for synthesis of pseudouridine from uracil-13 in transfer RNAs. The sequence is that of tRNA pseudouridine synthase D from Anaeromyxobacter dehalogenans (strain 2CP-C).